Consider the following 459-residue polypeptide: MNRLPSSASALACSAHALNLIEKQTLDHEEMKALNREVIEYFKEHVNPGFLEYRKSVTAGGDYGAVEWQAGGLNTLVDTQGQEFIDCLGGFGIFNVGHRNPVVVSAVQNQLAKQPLHSQELLDPLRAMLAKTLAALTPGKLKYSFFCNSGTESVEAALKLAKAYQSPRGKFTFIATSGAFHGKSLGALSATAKSTFRKPFMPLLPGFRHVPFGHIEAMRTALSECKKTGDDVAAVILEPIQGEGGVILPPPGYLTAVRKLCDEFGALMILDEVQTGMGRTGKMFACEHENVQPDILCLAKALGGGVMPIGATIATEEVFSVLFDNPFLHTTTFGGNPLACAAALATINVLLEQNLPAQAEQKGDMLLDGFRQLAREYPDLVQEARGKGMLMAIEFVDNEIGYNFASEMFRQRVLVAGTLNNAKTIRIEPPLTLTIEQCELVIKAARKALAAMRVSVEEA.

Pyridoxal 5'-phosphate contacts are provided by residues 150–151 (GT) and Gln-274. Lys-300 carries the post-translational modification N6-(pyridoxal phosphate)lysine. Residue Thr-332 coordinates pyridoxal 5'-phosphate.

It belongs to the class-III pyridoxal-phosphate-dependent aminotransferase family. Putrescine aminotransferase subfamily. The cofactor is pyridoxal 5'-phosphate.

It carries out the reaction an alkane-alpha,omega-diamine + 2-oxoglutarate = an omega-aminoaldehyde + L-glutamate. The enzyme catalyses putrescine + 2-oxoglutarate = 1-pyrroline + L-glutamate + H2O. It catalyses the reaction cadaverine + 2-oxoglutarate = 5-aminopentanal + L-glutamate. Its pathway is amine and polyamine degradation; putrescine degradation; 4-aminobutanal from putrescine (transaminase route): step 1/1. In terms of biological role, catalyzes the aminotransferase reaction from putrescine to 2-oxoglutarate, leading to glutamate and 4-aminobutanal, which spontaneously cyclizes to form 1-pyrroline. This is the first step in one of two pathways for putrescine degradation, where putrescine is converted into 4-aminobutanoate (gamma-aminobutyrate or GABA) via 4-aminobutanal. Also functions as a cadaverine transaminase in a a L-lysine degradation pathway to succinate that proceeds via cadaverine, glutarate and L-2-hydroxyglutarate. This Escherichia fergusonii (strain ATCC 35469 / DSM 13698 / CCUG 18766 / IAM 14443 / JCM 21226 / LMG 7866 / NBRC 102419 / NCTC 12128 / CDC 0568-73) protein is Putrescine aminotransferase.